We begin with the raw amino-acid sequence, 398 residues long: S-adenosylmethionine decarboxylase proenzyme (398 aa).

Active-site residues include glutamate 18 and glutamate 21. The Schiff-base intermediate with substrate; via pyruvic acid role is filled by serine 78. A Pyruvic acid (Ser); by autocatalysis modification is found at serine 78. Catalysis depends on cysteine 92, which acts as the Proton donor; for catalytic activity. Residues serine 243 and histidine 256 each act as proton acceptor; for processing activity in the active site.

This sequence belongs to the eukaryotic AdoMetDC family. Pyruvate serves as cofactor. In terms of processing, is synthesized initially as an inactive proenzyme. Formation of the active enzyme involves a self-maturation process in which the active site pyruvoyl group is generated from an internal serine residue via an autocatalytic post-translational modification. Two non-identical subunits are generated from the proenzyme in this reaction, and the pyruvate is formed at the N-terminus of the alpha chain, which is derived from the carboxyl end of the proenzyme. The post-translation cleavage follows an unusual pathway, termed non-hydrolytic serinolysis, in which the side chain hydroxyl group of the serine supplies its oxygen atom to form the C-terminus of the beta chain, while the remainder of the serine residue undergoes an oxidative deamination to produce ammonia and the pyruvoyl group blocking the N-terminus of the alpha chain.

The enzyme catalyses S-adenosyl-L-methionine + H(+) = S-adenosyl 3-(methylsulfanyl)propylamine + CO2. It participates in amine and polyamine biosynthesis; S-adenosylmethioninamine biosynthesis; S-adenosylmethioninamine from S-adenosyl-L-methionine: step 1/1. The polypeptide is S-adenosylmethionine decarboxylase proenzyme (SAMDC) (Oryza sativa subsp. japonica (Rice)).